The following is a 522-amino-acid chain: Terpineol synthase, chloroplastic (522 aa).

Residues arginine 242, aspartate 279, aspartate 283, arginine 414, and asparagine 417 each coordinate (2E)-geranyl diphosphate. 2 residues coordinate Mg(2+): aspartate 279 and aspartate 283. Residues 279–283 (DDVYD) carry the DDXXD motif motif. Mg(2+) is bound by residues asparagine 417, threonine 421, and glutamate 425.

This sequence belongs to the terpene synthase family. Tpsb subfamily. Monomer. Mg(2+) is required as a cofactor. Mn(2+) serves as cofactor. As to expression, confined to flowers.

It localises to the plastid. The protein resides in the chloroplast. It catalyses the reaction (2E)-geranyl diphosphate + H2O = (S)-alpha-terpineol + diphosphate. The enzyme catalyses (2E)-geranyl diphosphate = sabinene + diphosphate. It carries out the reaction (2E)-geranyl diphosphate = beta-myrcene + diphosphate. The catalysed reaction is (2E)-geranyl diphosphate = limonene + diphosphate. It catalyses the reaction (2E)-geranyl diphosphate + H2O = 1,8-cineole + diphosphate. The enzyme catalyses (2E)-geranyl diphosphate = alpha-pinene + diphosphate. Its pathway is secondary metabolite biosynthesis; terpenoid biosynthesis. In terms of biological role, monoterpene synthase (TPS) involved in the biosynthesis of monoterpene natural products of the 'cineole cassette', volatile compounds present in floral scent. Catalyzes the conversion of (2E)-geranyl diphosphate (GPP) into alpha-terpineol and, as minor products, sabinene, beta-myrcene, limonene, alpha-pinene and 1,8-cineole. In Nicotiana langsdorffii (Langsdorff's tobacco), this protein is Terpineol synthase, chloroplastic.